The following is a 491-amino-acid chain: Acetyl-coenzyme A carboxylase carboxyl transferase subunit beta (491 aa).

Residues 132 to 491 (LWNQCENCFI…ISELLNLHAL (360 aa)) enclose the CoA carboxyltransferase N-terminal domain. Zn(2+)-binding residues include cysteine 136, cysteine 139, cysteine 155, and cysteine 158. The segment at 136–158 (CENCFIPNYKKVLKSNMQICEEC) adopts a C4-type zinc-finger fold. Over residues 252–262 (EKVEEWTKPDL) the composition is skewed to basic and acidic residues. Disordered stretches follow at residues 252 to 273 (EKVE…DEER) and 279 to 298 (DKGE…EDDD). Positions 284 to 298 (SQEIEDSEANDEDDD) are enriched in acidic residues.

The protein belongs to the AccD/PCCB family. In terms of assembly, acetyl-CoA carboxylase is a heterohexamer composed of biotin carboxyl carrier protein, biotin carboxylase and 2 subunits each of ACCase subunit alpha and ACCase plastid-coded subunit beta (accD). Zn(2+) is required as a cofactor.

Its subcellular location is the plastid. It carries out the reaction N(6)-carboxybiotinyl-L-lysyl-[protein] + acetyl-CoA = N(6)-biotinyl-L-lysyl-[protein] + malonyl-CoA. The protein operates within lipid metabolism; malonyl-CoA biosynthesis; malonyl-CoA from acetyl-CoA: step 1/1. In terms of biological role, component of the acetyl coenzyme A carboxylase (ACC) complex. Biotin carboxylase (BC) catalyzes the carboxylation of biotin on its carrier protein (BCCP) and then the CO(2) group is transferred by the transcarboxylase to acetyl-CoA to form malonyl-CoA. The protein is Acetyl-coenzyme A carboxylase carboxyl transferase subunit beta of Cuscuta gronovii (Common dodder).